An 88-amino-acid chain; its full sequence is uncharacterized protein (88 aa).

This sequence belongs to the phD/YefM antitoxin family.

This is an uncharacterized protein from Sinorhizobium fredii (strain NBRC 101917 / NGR234).